Here is a 54-residue protein sequence, read N- to C-terminus: Potassium channel toxin alpha-KTx 14.1 (54 aa).

Positions 1-23 (MKIFFAILLILAVCSMAIWTVNG) are cleaved as a signal peptide.

The protein belongs to the short scorpion toxin superfamily. Potassium channel inhibitor family. Alpha-KTx 14 subfamily. In terms of processing, probably has three disulfide bridges. In terms of tissue distribution, expressed by the venom gland.

The protein resides in the secreted. Functionally, potential blocker of potassium channels. In Olivierus martensii (Manchurian scorpion), this protein is Potassium channel toxin alpha-KTx 14.1.